Here is a 218-residue protein sequence, read N- to C-terminus: MSDSSSVYDWFQERLEIQDITDDVTSKYVPPHVNIFYCLGGITLVCFLIQFATGFAMTFYYKPTVTQAYNSVSYLMTDVSFGWLIRSVHRWSASMMVLMLILHVFRVYLTGGFKRPRELTWVTGVVMAVITVAFGVTGYSLPWDQVGYWAVKIVSGVPAAIPIIGDFMVELLRGGESVGQSTLTRFYSLHTFVLPWSLAVFMLMHFLMIRKQGISGPL.

A helical membrane pass occupies residues 35–55; the sequence is IFYCLGGITLVCFLIQFATGF. Cysteine 38 lines the heme c pocket. Residues histidine 89 and histidine 103 each coordinate heme b. 3 helical membrane-spanning segments follow: residues 93–113, 119–139, and 189–209; these read ASMMVLMLILHVFRVYLTGGF, LTWVTGVVMAVITVAFGVTGY, and LHTFVLPWSLAVFMLMHFLMI. Heme b is bound by residues histidine 190 and histidine 205.

The protein belongs to the cytochrome b family. PetB subfamily. The 4 large subunits of the cytochrome b6-f complex are cytochrome b6, subunit IV (17 kDa polypeptide, PetD), cytochrome f and the Rieske protein, while the 4 small subunits are PetG, PetL, PetM and PetN. The complex functions as a dimer. The cofactor is heme b. Heme c serves as cofactor.

The protein localises to the cellular thylakoid membrane. In terms of biological role, component of the cytochrome b6-f complex, which mediates electron transfer between photosystem II (PSII) and photosystem I (PSI), cyclic electron flow around PSI, and state transitions. This chain is Cytochrome b6, found in Prochlorococcus marinus subsp. pastoris (strain CCMP1986 / NIES-2087 / MED4).